The chain runs to 1151 residues: Trafficking protein particle complex subunit 9 (1151 aa).

This sequence belongs to the NIBP family. In terms of assembly, part of the multisubunit TRAPP (transport protein particle) complex.

The protein localises to the golgi apparatus. The protein resides in the cis-Golgi network. It localises to the endoplasmic reticulum. Its subcellular location is the cytoplasm. In terms of biological role, functions as an activator of NF-kappa-B through increased phosphorylation of the IKK complex. May function in neuronal cells differentiation. May play a role in vesicular transport from endoplasmic reticulum to Golgi. This chain is Trafficking protein particle complex subunit 9 (trappc9), found in Xenopus laevis (African clawed frog).